Here is a 424-residue protein sequence, read N- to C-terminus: Elongation factor 1-alpha (424 aa).

The region spanning 5-223 (KPHLNLAFIG…NALKEPQKPV (219 aa)) is the tr-type G domain. Residues 14–21 (GHVDHGKS) are G1. Residue 14 to 21 (GHVDHGKS) participates in GTP binding. Residue S21 participates in Mg(2+) binding. A G2 region spans residues 70–74 (GVTID). The tract at residues 91-94 (DCPG) is G3. Residues 91–95 (DCPGH) and 146–149 (NKMD) each bind GTP. Positions 146–149 (NKMD) are G4. The tract at residues 187–189 (SAY) is G5.

Belongs to the TRAFAC class translation factor GTPase superfamily. Classic translation factor GTPase family. EF-Tu/EF-1A subfamily.

It localises to the cytoplasm. The catalysed reaction is GTP + H2O = GDP + phosphate + H(+). GTP hydrolase that promotes the GTP-dependent binding of aminoacyl-tRNA to the A-site of ribosomes during protein biosynthesis. This is Elongation factor 1-alpha from Methanothrix thermoacetophila (strain DSM 6194 / JCM 14653 / NBRC 101360 / PT) (Methanosaeta thermophila).